Here is a 243-residue protein sequence, read N- to C-terminus: Pyridoxine 5'-phosphate synthase (243 aa).

Residue Asn-9 coordinates 3-amino-2-oxopropyl phosphate. A 1-deoxy-D-xylulose 5-phosphate-binding site is contributed by 11–12 (DH). Position 20 (Arg-20) interacts with 3-amino-2-oxopropyl phosphate. The Proton acceptor role is filled by His-45. 1-deoxy-D-xylulose 5-phosphate-binding residues include Arg-47 and His-52. Catalysis depends on Glu-72, which acts as the Proton acceptor. Thr-102 is a 1-deoxy-D-xylulose 5-phosphate binding site. His-193 functions as the Proton donor in the catalytic mechanism. 3-amino-2-oxopropyl phosphate is bound by residues Gly-194 and 215-216 (GH).

Belongs to the PNP synthase family. As to quaternary structure, homooctamer; tetramer of dimers.

The protein resides in the cytoplasm. It catalyses the reaction 3-amino-2-oxopropyl phosphate + 1-deoxy-D-xylulose 5-phosphate = pyridoxine 5'-phosphate + phosphate + 2 H2O + H(+). It functions in the pathway cofactor biosynthesis; pyridoxine 5'-phosphate biosynthesis; pyridoxine 5'-phosphate from D-erythrose 4-phosphate: step 5/5. In terms of biological role, catalyzes the complicated ring closure reaction between the two acyclic compounds 1-deoxy-D-xylulose-5-phosphate (DXP) and 3-amino-2-oxopropyl phosphate (1-amino-acetone-3-phosphate or AAP) to form pyridoxine 5'-phosphate (PNP) and inorganic phosphate. This is Pyridoxine 5'-phosphate synthase from Photobacterium profundum (strain SS9).